The following is a 443-amino-acid chain: 3-ketoacyl-CoA thiolase 1, peroxisomal (443 aa).

Residues 1–30 (MEKATERQRILLRHLQPSSSSDASLSASAC) constitute a peroxisome transit peptide. The active-site Acyl-thioester intermediate is the C130. Residues H385 and C417 each act as proton acceptor in the active site.

Belongs to the thiolase-like superfamily. Thiolase family. In terms of assembly, homodimer. As to expression, low levels in seedlings and leaves.

The protein resides in the peroxisome. It catalyses the reaction an acyl-CoA + acetyl-CoA = a 3-oxoacyl-CoA + CoA. It functions in the pathway lipid metabolism; fatty acid metabolism. Its function is as follows. Involved in fatty-acid beta-oxidation prior to gluconeogenesis during germination and subsequent seedling growth. Implicated in jasmonic acid (JA) biosynthesis. The sequence is that of 3-ketoacyl-CoA thiolase 1, peroxisomal (KAT1) from Arabidopsis thaliana (Mouse-ear cress).